The primary structure comprises 253 residues: Phosphoadenosine 5'-phosphosulfate reductase (253 aa).

The active-site Nucleophile; cysteine thiosulfonate intermediate is C239.

This sequence belongs to the PAPS reductase family. CysH subfamily.

The protein resides in the cytoplasm. It catalyses the reaction [thioredoxin]-disulfide + sulfite + adenosine 3',5'-bisphosphate + 2 H(+) = [thioredoxin]-dithiol + 3'-phosphoadenylyl sulfate. Its pathway is sulfur metabolism; hydrogen sulfide biosynthesis; sulfite from sulfate: step 3/3. In terms of biological role, catalyzes the formation of sulfite from phosphoadenosine 5'-phosphosulfate (PAPS) using thioredoxin as an electron donor. The polypeptide is Phosphoadenosine 5'-phosphosulfate reductase (Aliivibrio salmonicida (strain LFI1238) (Vibrio salmonicida (strain LFI1238))).